A 474-amino-acid polypeptide reads, in one-letter code: JmjC domain-containing protein F (474 aa).

The segment at 247-269 (KTKKQQQQQQTTTTTANNDNDNS) is disordered. A compositionally biased stretch (low complexity) spans 251-261 (QQQQQQTTTTT). The JmjC domain occupies 305 to 474 (AYLAQHGLIE…LSLSFWFIKK (170 aa)).

The polypeptide is JmjC domain-containing protein F (jcdF) (Dictyostelium discoideum (Social amoeba)).